A 136-amino-acid polypeptide reads, in one-letter code: MKSGEPVNSHDVTDEQWEGLAQVVPLRGRDAWPSAVGHRAMPEAETERRRRFVVLRINVFADAREVAETLMAGIPVLLDLTSAEGEVAKRVLDFSTGVVFGLASGMHRVDRNVFLLTPAGTEVNGLMESAAGVPGV.

Belongs to the SepF family. Homodimer. Interacts with FtsZ.

Its subcellular location is the cytoplasm. Cell division protein that is part of the divisome complex and is recruited early to the Z-ring. Probably stimulates Z-ring formation, perhaps through the cross-linking of FtsZ protofilaments. Its function overlaps with FtsA. The chain is Cell division protein SepF 3 from Streptomyces coelicolor (strain ATCC BAA-471 / A3(2) / M145).